A 438-amino-acid polypeptide reads, in one-letter code: Serine hydroxymethyltransferase (438 aa).

Residues Leu133 and 137–139 contribute to the (6S)-5,6,7,8-tetrahydrofolate site; that span reads GHL. Lys242 bears the N6-(pyridoxal phosphate)lysine mark.

Belongs to the SHMT family. In terms of assembly, homodimer. Pyridoxal 5'-phosphate serves as cofactor.

Its subcellular location is the cytoplasm. The catalysed reaction is (6R)-5,10-methylene-5,6,7,8-tetrahydrofolate + glycine + H2O = (6S)-5,6,7,8-tetrahydrofolate + L-serine. Its pathway is one-carbon metabolism; tetrahydrofolate interconversion. It participates in amino-acid biosynthesis; glycine biosynthesis; glycine from L-serine: step 1/1. Its function is as follows. Catalyzes the reversible interconversion of serine and glycine with tetrahydrofolate (THF) serving as the one-carbon carrier. This reaction serves as the major source of one-carbon groups required for the biosynthesis of purines, thymidylate, methionine, and other important biomolecules. Also exhibits THF-independent aldolase activity toward beta-hydroxyamino acids, producing glycine and aldehydes, via a retro-aldol mechanism. This Brucella canis (strain ATCC 23365 / NCTC 10854 / RM-666) protein is Serine hydroxymethyltransferase.